The following is a 414-amino-acid chain: Succinylornithine transaminase (414 aa).

Residue lysine 260 is modified to N6-(pyridoxal phosphate)lysine.

The protein belongs to the class-III pyridoxal-phosphate-dependent aminotransferase family. AstC subfamily. Pyridoxal 5'-phosphate serves as cofactor.

It catalyses the reaction N(2)-succinyl-L-ornithine + 2-oxoglutarate = N-succinyl-L-glutamate 5-semialdehyde + L-glutamate. The protein operates within amino-acid degradation; L-arginine degradation via AST pathway; L-glutamate and succinate from L-arginine: step 3/5. Its function is as follows. Catalyzes the transamination of N(2)-succinylornithine and alpha-ketoglutarate into N(2)-succinylglutamate semialdehyde and glutamate. Can also act as an acetylornithine aminotransferase. In Yersinia enterocolitica serotype O:8 / biotype 1B (strain NCTC 13174 / 8081), this protein is Succinylornithine transaminase.